Here is a 121-residue protein sequence, read N- to C-terminus: SPbeta prophage-derived uncharacterized protein YorW (121 aa).

In Bacillus subtilis (strain 168), this protein is SPbeta prophage-derived uncharacterized protein YorW (yorW).